The sequence spans 352 residues: Thiamine-monophosphate kinase (352 aa).

Mg(2+) is bound by residues Asp58, Thr73, and Asp75. Residue His82 participates in substrate binding. Mg(2+)-binding residues include Asp103 and Asp151. ATP-binding positions include Gly150–Asp151 and Arg177. Asp239 is a Mg(2+) binding site. ATP is bound at residue Ser241. Asp242 is a Mg(2+) binding site. Positions 294 and 349 each coordinate substrate.

The protein belongs to the thiamine-monophosphate kinase family.

The catalysed reaction is thiamine phosphate + ATP = thiamine diphosphate + ADP. The protein operates within cofactor biosynthesis; thiamine diphosphate biosynthesis; thiamine diphosphate from thiamine phosphate: step 1/1. Its function is as follows. Catalyzes the ATP-dependent phosphorylation of thiamine-monophosphate (TMP) to form thiamine-pyrophosphate (TPP), the active form of vitamin B1. The sequence is that of Thiamine-monophosphate kinase from Caulobacter vibrioides (strain ATCC 19089 / CIP 103742 / CB 15) (Caulobacter crescentus).